The sequence spans 124 residues: uncharacterized protein (124 aa).

Functionally, not required for the biogenesis of c-type cytochromes. This is an uncharacterized protein from Rhodobacter capsulatus (strain ATCC BAA-309 / NBRC 16581 / SB1003).